We begin with the raw amino-acid sequence, 428 residues long: Gamma-glutamyl phosphate reductase (428 aa).

The protein belongs to the gamma-glutamyl phosphate reductase family.

The protein localises to the cytoplasm. The catalysed reaction is L-glutamate 5-semialdehyde + phosphate + NADP(+) = L-glutamyl 5-phosphate + NADPH + H(+). The protein operates within amino-acid biosynthesis; L-proline biosynthesis; L-glutamate 5-semialdehyde from L-glutamate: step 2/2. Its function is as follows. Catalyzes the NADPH-dependent reduction of L-glutamate 5-phosphate into L-glutamate 5-semialdehyde and phosphate. The product spontaneously undergoes cyclization to form 1-pyrroline-5-carboxylate. In Afipia carboxidovorans (strain ATCC 49405 / DSM 1227 / KCTC 32145 / OM5) (Oligotropha carboxidovorans), this protein is Gamma-glutamyl phosphate reductase.